The primary structure comprises 129 residues: Large ribosomal subunit protein bL12 (129 aa).

The tract at residues 94-113 is disordered; the sequence is TEGLPKTVKEKTSKSDAEDT.

This sequence belongs to the bacterial ribosomal protein bL12 family. As to quaternary structure, homodimer. Part of the ribosomal stalk of the 50S ribosomal subunit. Forms a multimeric L10(L12)X complex, where L10 forms an elongated spine to which 2 to 4 L12 dimers bind in a sequential fashion. Binds GTP-bound translation factors.

In terms of biological role, forms part of the ribosomal stalk which helps the ribosome interact with GTP-bound translation factors. Is thus essential for accurate translation. In Chlamydia pneumoniae (Chlamydophila pneumoniae), this protein is Large ribosomal subunit protein bL12.